Reading from the N-terminus, the 374-residue chain is tRNA-specific 2-thiouridylase MnmA (374 aa).

ATP contacts are provided by residues 13–20 (GMSGGVDS) and M39. The segment at 99–101 (NPD) is interaction with target base in tRNA. Residue C104 is the Nucleophile of the active site. C104 and C201 are oxidised to a cystine. G128 contacts ATP. The interaction with tRNA stretch occupies residues 151-153 (KDQ). Residue C201 is the Cysteine persulfide intermediate of the active site. An interaction with tRNA region spans residues 313-314 (RY).

This sequence belongs to the MnmA/TRMU family.

The protein resides in the cytoplasm. The enzyme catalyses S-sulfanyl-L-cysteinyl-[protein] + uridine(34) in tRNA + AH2 + ATP = 2-thiouridine(34) in tRNA + L-cysteinyl-[protein] + A + AMP + diphosphate + H(+). Its function is as follows. Catalyzes the 2-thiolation of uridine at the wobble position (U34) of tRNA, leading to the formation of s(2)U34. The protein is tRNA-specific 2-thiouridylase MnmA of Streptococcus suis (strain 98HAH33).